Here is a 325-residue protein sequence, read N- to C-terminus: S-adenosylmethionine carrier 1, chloroplastic/mitochondrial (325 aa).

The transit peptide at M1 to A38 directs the protein to the chloroplast and mitochondrion. Solcar repeat units lie at residues R52–K124, L133–G215, and E228–T310. The next 5 membrane-spanning stretches (helical) occupy residues F55 to I75, Y97 to V117, H132 to I152, A230 to I250, and G285 to E305.

This sequence belongs to the mitochondrial carrier (TC 2.A.29) family. As to expression, expressed in seedlings, cotyledons, leaves and flowers. Lower levels of expression in stems and roots. Not detected in senescent leaves, petals and pollen grains.

Its subcellular location is the mitochondrion membrane. It localises to the plastid. The protein resides in the chloroplast membrane. Inhibited strongly by tannic acid, bromocresol purple, mercuric chloride, mersalyl, p-hydroxymercuribenzoate, S-adenosylhomocysteine, S-adenosylcysteine and adenosylornithine, and to a lesser extent by N-ethylmaleimide, bathophenanthroline and pyridoxal-5'-P. Transporter involved in exchange reactions through membranes. Has a low uniporter activity. Specifically mediates the transport of S-adenosylmethionine (SAM) and its closest analogs. Probably involved in the uptake of SAM in exchange for S-adenosylhomocysteine (SAHC), which is produced from SAM in the mitochondrial matrix and plastidial stroma by methyltransferase activities. The polypeptide is S-adenosylmethionine carrier 1, chloroplastic/mitochondrial (SAMC1) (Arabidopsis thaliana (Mouse-ear cress)).